The primary structure comprises 760 residues: H(+)/Cl(-) exchange transporter 4 (760 aa).

Over 1 to 67 (MVNAGAMSGS…WEFIKSLLDA (67 aa)) the chain is Cytoplasmic. Positions 14-63 (MDFLDEPFPDVGTYEDFHTIDWLREKSRDTDRHRKITSKSKESIWEFIKS) are required for localization in the endoplasmic reticulum. 2 helical membrane passes run 68 to 105 (WSGWVVMLLIGLLAGTLAGVIDLAVDWMTDLKEGVCLS) and 151 to 174 (LNYLMYILWALLFAFLAVSLVRVF). The short motif at 180–184 (GSGIP) is the Selectivity filter part_1 element. A chloride-binding site is contributed by Ser181. Positions 183–190 (IPEIKTIL) form an intramembrane region, helical. The next 2 membrane-spanning stretches (helical) occupy residues 200 to 218 (GKWTLLIKTVTLVLVVSSG) and 224 to 243 (EGPLVHVACCCGNFFSSLFS). Positions 222–226 (GKEGP) match the Selectivity filter part_2 motif. 2 intramembrane regions (helical) span residues 255–267 (VLSAAAAAGVSVA) and 271–279 (PIGGVLFSL). The next 5 helical transmembrane spans lie at 291-309 (LWRSFFAALVAAFTLRSIN), 333-358 (FPFILLGVFGGLWGTLFIRCNIAWCR), 365-385 (LGKYPVLEVIVVTAITAIIAY), 442-462 (MWQLALALIFKIVVTIFTFGM), and 467-486 (GLFIPSMAVGAIAGRMVGIG). Positions 467-471 (GLFIP) match the Selectivity filter part_3 motif. Residue Phe469 participates in chloride binding. 2 consecutive intramembrane regions (helical) follow at residues 514-528 (GLYAMVGAAACLGGV) and 532-543 (TVSLVVIMFELT). The note=Loop between two helices intramembrane region spans 544–547 (GGLE). The chain crosses the membrane as a helical span at residues 548-566 (YIVPLMAAAVTSKWVADAF). Residues 567 to 760 (GKEGIYEAHI…NQDPESIMFN (194 aa)) lie on the Cytoplasmic side of the membrane. Tyr572 contributes to the chloride binding site. Residues 600 to 666 (MRPRRGEPPL…AIKNARQRQE (67 aa)) enclose the CBS 1 domain. ATP contacts are provided by residues Ser610 and 631 to 633 (YNG). The required for localization in the endoplasmic reticulum stretch occupies residues 667–696 (GIVSNSIMYFTEEPPELPANSPHPLKLRRI). The region spanning 697-755 (LNLSPFTVTDHTPMETVVDIFRKLGLRQCLVTRSGRLLGIITKKDVLRHMAQMANQDPE) is the CBS 2 domain. Residue 738–741 (TKKD) participates in ATP binding.

Belongs to the chloride channel (TC 2.A.49) family. ClC-4/CLCN4 subfamily. As to quaternary structure, monomer. Forms heterodimers with CLCN3. In terms of tissue distribution, abundant in skeletal muscle and also detectable in brain and heart.

It localises to the early endosome membrane. The protein resides in the late endosome membrane. It is found in the endoplasmic reticulum membrane. Its subcellular location is the lysosome membrane. The protein localises to the recycling endosome membrane. In terms of biological role, strongly outwardly rectifying, electrogenic H(+)/Cl(-)exchanger which mediates the exchange of chloride ions against protons. The CLC channel family contains both chloride channels and proton-coupled anion transporters that exchange chloride or another anion for protons. The presence of conserved gating glutamate residues is typical for family members that function as antiporters. The protein is H(+)/Cl(-) exchange transporter 4 (CLCN4) of Homo sapiens (Human).